A 192-amino-acid polypeptide reads, in one-letter code: LexA repressor (192 aa).

The segment at residues 15-35 is a DNA-binding region (H-T-H motif); the sequence is RAEIARELGFRSANAAEEHLK. Residues serine 109 and lysine 146 each act as for autocatalytic cleavage activity in the active site.

Belongs to the peptidase S24 family. As to quaternary structure, homodimer.

The enzyme catalyses Hydrolysis of Ala-|-Gly bond in repressor LexA.. In terms of biological role, represses a number of genes involved in the response to DNA damage (SOS response), including recA and lexA. In the presence of single-stranded DNA, RecA interacts with LexA causing an autocatalytic cleavage which disrupts the DNA-binding part of LexA, leading to derepression of the SOS regulon and eventually DNA repair. This is LexA repressor from Photobacterium profundum (strain SS9).